We begin with the raw amino-acid sequence, 73 residues long: Putative antimicrobial peptide clone 5 (73 aa).

A signal peptide spans 1 to 22 (MQIKHLITLFFLVLIGADQCSA). Positions 45–73 (EVSPQIDQYRNFQKREAELEELLDRLPMY) are excised as a propeptide.

It belongs to the non-disulfide-bridged peptide (NDBP) superfamily. Short antimicrobial peptide (group 4) family. In terms of tissue distribution, expressed by the venom gland.

It is found in the secreted. Its function is as follows. Antibacterial peptide. This is Putative antimicrobial peptide clone 5 from Tityus costatus (Brazilian scorpion).